The sequence spans 444 residues: Nuclear envelope integral membrane protein 1 (444 aa).

The N-terminal stretch at 1–43 (MAGGMKVAVSPAVGPGPWGSGVGGGGTVRLLLILSGCLVYGTA) is a signal peptide. Residue Asn-125 is glycosylated (N-linked (GlcNAc...) asparagine). 5 helical membrane-spanning segments follow: residues 161-181 (PKLF…DLLS), 186-206 (FYYS…IIFI), 216-236 (PIYV…QLVF), 245-265 (CYWQ…FAVC), and 289-309 (LCFM…IIIA). Positions 186–297 (FYYSTGMTVG…GLCFMYSGIQ (112 aa)) are a; required for its colocalization with lamins at the nuclear envelope. Positions 336 to 405 (PVPPRLLTEE…LTPNEVSVHE (70 aa)) are b; required for interaction with RAN-GTP. A required for nuclear localization region spans residues 336–444 (PVPPRLLTEE…PAITQNNFLT (109 aa)). A phosphoserine mark is found at Ser-368, Ser-424, and Ser-425.

This sequence belongs to the NEMP family. Homooligomer. Interacts with RAN-GTP. Interacts with EMD. In terms of processing, phosphorylation may regulate its interaction with RAN-GTP.

The protein localises to the nucleus inner membrane. Its subcellular location is the nucleus envelope. Its function is as follows. Together with EMD, contributes to nuclear envelope stiffness in germ cells. Required for female fertility. Essential for normal erythropoiesis. Required for efficient nuclear envelope opening and enucleation during the late stages of erythroblast maturation. The sequence is that of Nuclear envelope integral membrane protein 1 (NEMP1) from Homo sapiens (Human).